The primary structure comprises 580 residues: Guanine nucleotide-binding protein alpha-4 subunit (580 aa).

Polar residues predominate over residues 1 to 10 (MSPSVSSPQL). Positions 1-28 (MSPSVSSPQLRHTKSNRAISRIDRTDPL) are disordered. One can recognise a G-alpha domain in the interval 93–579 (RVYKMVLLGQ…RENLKLTGLV (487 aa)). Residues 96 to 109 (KMVLLGQAGAGKTT) form a G1 motif region. Residue 101–108 (GQAGAGKT) participates in GTP binding. Disordered stretches follow at residues 160–196 (KSSE…PNDA) and 302–325 (GRAA…KDNS). Over residues 167–183 (LESSTSASTSTSASASS) the composition is skewed to low complexity. A G2 motif region spans residues 387–395 (DILHSRVRT). GTP is bound by residues 389-395 (LHSRVRT), 415-419 (DVGGS), 484-487 (NKID), and Ala-551. Thr-395 contacts Mg(2+). The G3 motif stretch occupies residues 411 to 420 (YRIYDVGGSR). The interval 480-487 (ILFLNKID) is G4 motif. The tract at residues 549–554 (TVATST) is G5 motif.

The protein belongs to the G-alpha family. G proteins are composed of 3 units; alpha, beta and gamma. The alpha chain contains the guanine nucleotide binding site.

Guanine nucleotide-binding proteins (G proteins) are involved as modulators or transducers in various transmembrane signaling systems. The protein is Guanine nucleotide-binding protein alpha-4 subunit (GPA4) of Mycosarcoma maydis (Corn smut fungus).